The following is a 1387-amino-acid chain: MEVLMAERADLVFHNKAIDGTAMKRLISRLIDHFGMAYTSHILDQVKTLGFQQATATSISLGIDDLLTIPSKGWLVQDAEQQSLILEKHHHYGNVHAVEKLRQSIEIWYATSEYLRQEMNPNFRMTNPSNPVHIMSFSGARGNASQVHQLVGMRGLMSDPQGQMIDLPIQSNLREGLSLTEYIISCYGARKGVVDTAVRTSDAGYLTRRLVEVVQHIVVRRTDCGTLQGISVSPRNGMITERILIQTLIGRVLADDIYMGPRCIAARNQDIGIGLVNRFITFGAQPISIRTPFTCRSISWICRLCYGRSPTHGDLVELGEAVGIIAGQSIGEPGTQLTLRTFHTGGVFTGGTAEHVRAPSNGKIKFNEDLVHPTRTRHGHPAFLCYIDLYVTIESQDIIHNVNIPPKSFLLVQNDQYVESEQVIAEIRAGTSTLNFKERVRKHIYSDSEGEMHWSTNVYHAPEYTYSHVHLLPKTSHLWILSGGSYRSSIVPLSLHKDQDQMNVHSLSVERRYISNFSVTNDQVRHKLFNSYPSSKKGERILDYSGTDRIICNGHCNFIYPSILHENSDLLAKRRRNRFIIPFQSNQEREKELMSRSDISIEIPINGIFRRNSILAYFDDPRYRRNNSGITKYGTIEVHAIVKKEDLIEYRRAKEFRPKYQMKVDRFFFIPEEVHILPGSSSIMVRNNSIIGVDTRITLNARSRVGGLVRVERKKKRIELKIFSGDIHFPGETDKISRHSGILIPPGTGKKNSKKSKKKLQNWIYVQRITPIKKKYFVFVRPVVTYEIADGINLATLFPQDLLQERDNVQLRVVNYILYANGKPIRGISHTTIQLVRTCLVLNWDQGKNGSSIKEVHASFVEVRANDLIQDFIRMDLVKSTISHTGKRNDPAGSGLIPDNGSDRTNINPFYSKARIQQSLSRHQGTLRSLLNRNKECQSLIILSSSNCSQMGPLNTLKYHNVTKESIKRDPPIPIRNSLGPLGTVPKITNFYSSYYQLITHNQILVSKYLLLANLKQTLQVFKYYLMDENGKIYNPDPCSNIIFNPFNLNWYFLHHDYCEETSTIISLGQFFCENVCISKKGPHLKSGQVLIVHVDSLVIRSAKPYLATPGATVHGHYGEILYKGDTLVTFIYEKSRSGDITQGLPKVEQVLEVRSIDSISMTLENRVEGWNERITRILGIPWEYLIGAELTIAQSRISLVNKIQKVYRSQGVQIHNRHIEIIVRQITSKVLVSEDGMSNVFSPGELIGLFRAERTGRALEEAICYRAVLLGITRASLNTQSFISEASFQETARVLAKAALRGRIDWLKGLKENVVLGGMIPVGTGFKGLVHRSREHNNIPLEIKKKNLFEGEMRDTLFHHRELFDSCIPKNFHDTSKQSFTGFNDF.

4 residues coordinate Zn(2+): Cys-224, Cys-295, Cys-302, and Cys-305. The segment at 883-903 (SHTGKRNDPAGSGLIPDNGSD) is disordered.

Belongs to the RNA polymerase beta' chain family. RpoC2 subfamily. As to quaternary structure, in plastids the minimal PEP RNA polymerase catalytic core is composed of four subunits: alpha, beta, beta', and beta''. When a (nuclear-encoded) sigma factor is associated with the core the holoenzyme is formed, which can initiate transcription. Zn(2+) serves as cofactor.

It is found in the plastid. The protein resides in the chloroplast. The catalysed reaction is RNA(n) + a ribonucleoside 5'-triphosphate = RNA(n+1) + diphosphate. Its function is as follows. DNA-dependent RNA polymerase catalyzes the transcription of DNA into RNA using the four ribonucleoside triphosphates as substrates. The protein is DNA-directed RNA polymerase subunit beta'' of Platanus occidentalis (Sycamore).